The sequence spans 238 residues: Oxidoreductase dmxR7 (238 aa).

Belongs to the avfA family.

The protein operates within secondary metabolite biosynthesis. In terms of biological role, oxidoreductase; part of the gene cluster that mediates the biosynthesis of the dimeric xanthones cryptosporioptides. The pathway begins with the synthesis of atrochrysone thioester by the polyketide synthase dmx-nrPKS. The atrochrysone carboxyl ACP thioesterase dmxR1 then breaks the thioester bond and releases the atrochrysone carboxylic acid from dmx-nrPKS. Atrochrysone carboxylic acid is decarboxylated by the decarboxylase dmxR15, and oxidized by the anthrone oxygenase dmxR16 to yield emodin. Emodin is then reduced to emodin hydroquinone by the oxidoreductase dmxR7. A-ring reduction by the short chain dehydrogenase dmxR18, dehydration by the scytalone dehydratase-like protein dmxR17 and probable spontaneous re-oxidation, results in overall deoxygenation to chrysophanol. Baeyer-Villiger oxidation by the Baeyer-Villiger monooxygenase (BVMO) dmxR6 then yields monodictylactone in equilibrium with monodictyphenone. In the case of the cryptosporioptides biosynthesis, monodictylactone is reduced at C-12 to an alcohol (by the short chain dehydrogenases dmxR12 or dmxR8) and hydroxylated at C-5 by dmxR9, yielding the electron-rich aromatic which could eliminate H(2)O to form the ortho-quinonemethide, followed by tautomerisation to paraquinone and complete the formal reduction to produce the 10-methylgroup. Conjugate addition of C-4a-OH to the resulting paraquinone by the monooxygenase dmxR10 then gives cyclohexadienone, which is then reduced at C-5 by the short chain dehydrogenase dmxR3 to give the dihydroxanthone. The 6,7-epoxide in the cryptosporioptides could be introduced by the cytochrome P450 monooxygenase dmxL3. The highly reducing PKS dmxL2 manufactures butyrate, which is further carboxylated by dmxL1 to form ethylmalonate. It is not yet clear whether the carboxylation occurs while the butyrate is attached to the ACP of dmxL2, but this unusual fungal metabolite could then be esterified to O-5 by the O-acetyltransferase dmxR13. Finally, dimerization performed by dmxR5 gives the observed dimers cryptosporioptides A, B and C as the final products of the pathway. In Cryptosporiopsis sp. (strain 8999), this protein is Oxidoreductase dmxR7.